Here is a 430-residue protein sequence, read N- to C-terminus: Long-chain specific acyl-CoA dehydrogenase, mitochondrial (430 aa).

The N-terminal 30 residues, 1-30 (MAARLLRGSLRFLGGHCAARPLPALRCSHS), are a transit peptide targeting the mitochondrion. K42 bears the N6-acetyllysine mark. Phosphoserine is present on residues S54 and S55. N6-acetyllysine; alternate is present on residues K66 and K81. N6-succinyllysine; alternate is present on residues K66 and K81. An N6-acetyllysine mark is found at K92 and K95. K165 bears the N6-succinyllysine mark. FAD contacts are provided by residues 170–179 (IAMTELGAGS) and 203–205 (FIS). S179 serves as a coordination point for substrate. Residue 227–228 (AR) coordinates substrate. Position 240 is an N6-succinyllysine (K240). Residues K254 and K279 each carry the N6-acetyllysine; alternate modification. Residues K254 and K279 each carry the N6-succinyllysine; alternate modification. Residues Y282 and 289–292 (PQER) each bind substrate. E291 acts as the Proton acceptor in catalysis. R317 is a binding site for FAD. At K318 the chain carries N6-acetyllysine. K322 carries the N6-acetyllysine; alternate modification. K322 is modified (N6-succinyllysine; alternate). Q328 is an FAD binding site. K358 carries the post-translational modification N6-acetyllysine. At S362 the chain carries Phosphoserine. An FAD-binding site is contributed by 385–389 (QLHGG). 412–413 (GG) contacts substrate. 414 to 416 (TNE) is a binding site for FAD.

The protein belongs to the acyl-CoA dehydrogenase family. In terms of assembly, homotetramer. Requires FAD as cofactor. In terms of processing, acetylation at Lys-318 and Lys-322 in proximity of the cofactor-binding sites strongly reduces catalytic activity. These sites are deacetylated by SIRT3.

It is found in the mitochondrion matrix. The catalysed reaction is a long-chain 2,3-saturated fatty acyl-CoA + oxidized [electron-transfer flavoprotein] + H(+) = a long-chain (2E)-enoyl-CoA + reduced [electron-transfer flavoprotein]. It catalyses the reaction hexanoyl-CoA + oxidized [electron-transfer flavoprotein] + H(+) = (2E)-hexenoyl-CoA + reduced [electron-transfer flavoprotein]. The enzyme catalyses octanoyl-CoA + oxidized [electron-transfer flavoprotein] + H(+) = (2E)-octenoyl-CoA + reduced [electron-transfer flavoprotein]. It carries out the reaction decanoyl-CoA + oxidized [electron-transfer flavoprotein] + H(+) = (2E)-decenoyl-CoA + reduced [electron-transfer flavoprotein]. The catalysed reaction is dodecanoyl-CoA + oxidized [electron-transfer flavoprotein] + H(+) = (2E)-dodecenoyl-CoA + reduced [electron-transfer flavoprotein]. It catalyses the reaction tetradecanoyl-CoA + oxidized [electron-transfer flavoprotein] + H(+) = (2E)-tetradecenoyl-CoA + reduced [electron-transfer flavoprotein]. The enzyme catalyses oxidized [electron-transfer flavoprotein] + hexadecanoyl-CoA + H(+) = (2E)-hexadecenoyl-CoA + reduced [electron-transfer flavoprotein]. It carries out the reaction octadecanoyl-CoA + oxidized [electron-transfer flavoprotein] + H(+) = (2E)-octadecenoyl-CoA + reduced [electron-transfer flavoprotein]. The catalysed reaction is eicosanoyl-CoA + oxidized [electron-transfer flavoprotein] + H(+) = (2E)-eicosenoyl-CoA + reduced [electron-transfer flavoprotein]. It catalyses the reaction docosanoyl-CoA + oxidized [electron-transfer flavoprotein] + H(+) = (2E)-docosenoyl-CoA + reduced [electron-transfer flavoprotein]. The enzyme catalyses tetracosanoyl-CoA + oxidized [electron-transfer flavoprotein] + H(+) = (2E)-tetracosenoyl-CoA + reduced [electron-transfer flavoprotein]. It carries out the reaction (5E)-tetradecenoyl-CoA + oxidized [electron-transfer flavoprotein] + H(+) = (2E,5E)-tetradecadienoyl-CoA + reduced [electron-transfer flavoprotein]. The catalysed reaction is (5Z)-tetradecenoyl-CoA + oxidized [electron-transfer flavoprotein] + H(+) = (2E,5Z)-tetradecadienoyl-CoA + reduced [electron-transfer flavoprotein]. It catalyses the reaction oxidized [electron-transfer flavoprotein] + (9Z)-octadecenoyl-CoA + H(+) = (2E,9Z)-octadecadienoyl-CoA + reduced [electron-transfer flavoprotein]. It functions in the pathway lipid metabolism; mitochondrial fatty acid beta-oxidation. Long-chain specific acyl-CoA dehydrogenase is one of the acyl-CoA dehydrogenases that catalyze the first step of mitochondrial fatty acid beta-oxidation, an aerobic process breaking down fatty acids into acetyl-CoA and allowing the production of energy from fats. The first step of fatty acid beta-oxidation consists in the removal of one hydrogen from C-2 and C-3 of the straight-chain fatty acyl-CoA thioester, resulting in the formation of trans-2-enoyl-CoA. Among the different mitochondrial acyl-CoA dehydrogenases, long-chain specific acyl-CoA dehydrogenase can act on saturated and unsaturated acyl-CoAs with 6 to 24 carbons with a preference for 8 to 18 carbons long primary chains. This Macaca fascicularis (Crab-eating macaque) protein is Long-chain specific acyl-CoA dehydrogenase, mitochondrial.